The following is a 398-amino-acid chain: MTCQPVMDCPVTLVIKAPNQKYDDQTINCFLDWTVEKLKSHLSKVYPSKPSAKDQRLVYSGKLLLDHLLLKDVLRKQDEYHMVHLVCASRTPPSSPKASKSSKSMGTSSSGRSSSSGSANPGSTSQDTSSTYPDPRPGESIRHRHTPLMYNNLVHSHPYSYLRQEYALNPPPGQEAPSIFPAYSAFTPLQMMWWQQLYARQYYIYSQATASNQSTSNGENAQPVPRPVTNSENPPPNPPRAPPNVAPEINPNIQMNAQGGPVMNEEDINRDWLDWIYTVSRAAILLSIVYFYSSFSRFVMVMGALILVYMHQAGWFPLLQDEGQQHPGDNAAEVNPDLVNNNDPQELERRMDDGLQEVHNNDAGVNVVARQGVLASAWSFITTFFTSLIPEGPPQGVN.

Positions 11 to 90 (VTLVIKAPNQ…HMVHLVCASR (80 aa)) constitute a Ubiquitin-like domain. Disordered regions lie at residues 90-143 (RTPP…SIRH) and 212-247 (NQST…NVAP). The span at 96-125 (PKASKSSKSMGTSSSGRSSSSGSANPGSTS) shows a compositional bias: low complexity. The segment covering 233–245 (NPPPNPPRAPPNV) has biased composition (pro residues). The helical transmembrane segment at 298–318 (FVMVMGALILVYMHQAGWFPL) threads the bilayer.

It is found in the membrane. In terms of biological role, could be involved in the unfolded protein response (UPR) pathway. The chain is Homocysteine-responsive endoplasmic reticulum-resident ubiquitin-like domain member 2 protein (herpud2) from Xenopus laevis (African clawed frog).